We begin with the raw amino-acid sequence, 120 residues long: UPF0344 protein LMHCC_0278 (120 aa).

The next 4 membrane-spanning stretches (helical) occupy residues 3-23 (GYIH…ALLI), 33-53 (MLQM…IMMV), 62-82 (ILAI…EMLL), and 92-112 (GMFL…GFYL).

This sequence belongs to the UPF0344 family.

Its subcellular location is the cell membrane. In Listeria monocytogenes serotype 4a (strain HCC23), this protein is UPF0344 protein LMHCC_0278.